The chain runs to 479 residues: Kynurenine 3-monooxygenase (479 aa).

Belongs to the aromatic-ring hydroxylase family. KMO subfamily. The cofactor is FAD.

It localises to the mitochondrion outer membrane. The catalysed reaction is L-kynurenine + NADPH + O2 + H(+) = 3-hydroxy-L-kynurenine + NADP(+) + H2O. It functions in the pathway cofactor biosynthesis; NAD(+) biosynthesis; quinolinate from L-kynurenine: step 1/3. Functionally, catalyzes the hydroxylation of L-kynurenine (L-Kyn) to form 3-hydroxy-L-kynurenine (L-3OHKyn). Required for synthesis of quinolinic acid. This is Kynurenine 3-monooxygenase from Chaetomium globosum (strain ATCC 6205 / CBS 148.51 / DSM 1962 / NBRC 6347 / NRRL 1970) (Soil fungus).